The primary structure comprises 1040 residues: Regulator of telomere elongation helicase 1 homolog (1040 aa).

Positions 52 to 355 (RGINVEFPFE…KGLLLKLQEL (304 aa)) constitute a Helicase ATP-binding domain. An ATP-binding site is contributed by 87 to 94 (SPTGTGKT). Residues 117–137 (RKNSAIPWSDSDEPLSQSGGG) form a disordered region. [4Fe-4S] cluster contacts are provided by C181, C202, C210, and C246. Residues 289–292 (DEAH) carry the DEAH box motif. Residues 926–949 (KVPESQGSASSSVLTAKGNGGGDK) form a disordered region. Residues 930–939 (SQGSASSSVL) show a composition bias toward polar residues. The short motif at 992-999 (QSIVQLFC) is the PIP-box; degenerate element.

This sequence belongs to the helicase family. RAD3/XPD subfamily.

The protein resides in the nucleus. The catalysed reaction is ATP + H2O = ADP + phosphate + H(+). In terms of biological role, a probable ATP-dependent DNA helicase implicated in DNA replication, DNA repair and the maintenance of genomic stability. Acts as an anti-recombinase to counteract toxic recombination and limit crossover during meiosis. Regulates meiotic recombination and crossover homeostasis by physically dissociating strand invasion events and thereby promotes noncrossover repair by meiotic synthesis dependent strand annealing (SDSA) as well as disassembly of D loop recombination intermediates. Also plays a role in preserving the stability of 45S rDNA repeats. The polypeptide is Regulator of telomere elongation helicase 1 homolog (Arabidopsis thaliana (Mouse-ear cress)).